We begin with the raw amino-acid sequence, 459 residues long: Alcohol acyl transferase 1 allele RGc (459 aa).

Catalysis depends on proton acceptor residues His-164 and Asn-385.

This sequence belongs to the plant acyltransferase family. As to expression, expressed at very low levels in the skin of ripe fruit.

Involved in the biosynthesis of volatile esters which confer ripe apple fruit flavor. Alcohol acyl transferase that can use a wide range of alcohols as substrate to produce esters. The chain is Alcohol acyl transferase 1 allele RGc from Malus domestica (Apple).